Consider the following 723-residue polypeptide: Aspartate--tRNA(Asp/Asn) ligase 1 (723 aa).

An L-aspartate-binding site is contributed by Glu206. An aspartate region spans residues Gln230–Lys233. Position 252 (Arg252) interacts with L-aspartate. ATP contacts are provided by residues Arg252–Glu254 and Gln261. His481 is a binding site for L-aspartate. Glu516 is a binding site for ATP. Arg523 provides a ligand contact to L-aspartate. Gly568–Arg571 provides a ligand contact to ATP.

The protein belongs to the class-II aminoacyl-tRNA synthetase family. Type 1 subfamily. In terms of assembly, homodimer.

It is found in the cytoplasm. It carries out the reaction tRNA(Asx) + L-aspartate + ATP = L-aspartyl-tRNA(Asx) + AMP + diphosphate. In terms of biological role, aspartyl-tRNA synthetase with relaxed tRNA specificity since it is able to aspartylate not only its cognate tRNA(Asp) but also tRNA(Asn). Reaction proceeds in two steps: L-aspartate is first activated by ATP to form Asp-AMP and then transferred to the acceptor end of tRNA(Asp/Asn). The protein is Aspartate--tRNA(Asp/Asn) ligase 1 of Syntrophus aciditrophicus (strain SB).